The primary structure comprises 433 residues: Probable phosphoglucosamine mutase (433 aa).

The Phosphoserine intermediate role is filled by S91. 4 residues coordinate Mg(2+): S91, D229, D231, and D233. S91 carries the post-translational modification Phosphoserine.

This sequence belongs to the phosphohexose mutase family. Mg(2+) serves as cofactor. In terms of processing, activated by phosphorylation.

The enzyme catalyses alpha-D-glucosamine 1-phosphate = D-glucosamine 6-phosphate. Its function is as follows. Catalyzes the conversion of glucosamine-6-phosphate to glucosamine-1-phosphate. In Methanococcoides burtonii (strain DSM 6242 / NBRC 107633 / OCM 468 / ACE-M), this protein is Probable phosphoglucosamine mutase.